A 433-amino-acid chain; its full sequence is MANIVAIVGRPNVGKSTLFNRLVEERKAIMASESGTTRDRHYGYATWNGKNFTVVDTGGYVQGSSDIFEKSICEQAKIAIEEASVVLFMVDCQVGITAMDKEVAHILRAADKPVLLVANKADNVDTALMAHEFHALGLGNPYPISAASGTGTGDLLDQVTVYCQDTIEQETDIPKIAILGRPNVGKSSLLNALLGEERSIVTPIAGTTRDAIDTTYNLYGKNFILTDTAGIRKKSKVKEDIEFYSTLRALKALQDADVCIIMIDATLGLEGQDVNLISLAYKYKKGILLLVNKWDLIKKDNHTNAQFKKNIEQELGAHSHIPILFISALHKQRIFQAIEKALEVYTNKTQKISTAALNQTMLPVIERYPPPAVKGKYIKIKYVARLPTHTPVIAFFCNLPQYVQPPYKRYLENQLRKNFNLAGVPVQLVFRKK.

2 consecutive EngA-type G domains span residues 3–167 and 174–349; these read NIVA…QDTI and PKIA…TNKT. GTP-binding positions include 9–16, 56–60, 119–122, 180–187, 227–231, and 292–295; these read GRPNVGKS, DTGGY, NKAD, DTAGI, and NKWD. The KH-like domain maps to 350 to 433; sequence QKISTAALNQ…VPVQLVFRKK (84 aa).

Belongs to the TRAFAC class TrmE-Era-EngA-EngB-Septin-like GTPase superfamily. EngA (Der) GTPase family. In terms of assembly, associates with the 50S ribosomal subunit.

Functionally, GTPase that plays an essential role in the late steps of ribosome biogenesis. This chain is GTPase Der, found in Amoebophilus asiaticus (strain 5a2).